The chain runs to 349 residues: MSKIRVLSVDDSALMRQIMTEIINSHSDMEMVATAPDPLVARDLIKKFNPDVLTLDVEMPRMDGLDFLEKLMRLRPMPVVMVSSLTGKGSEVTLRALELGAIDFVTKPQLGIREGMLAYSEMIAEKVRTAARARIAAHKPMAAPATLKAGPLLSSEKLIAIGASTGGTEAIRHVLQPLPLSSPAVIITQHMPPGFTRSFAERLNKLCQISVKEAEDGERVLPGHAYIAPGDKHMELARSGANYQIKIHDGPPVNRHRPSVDVLFHSVAKHAGRNAVGVILTGMGNDGAAGMLAMYQAGAWTIAQNEASCVVFGMPREAINMGGVSEVVDLSQVSQQMLAKISAGQAIRI.

One can recognise a Response regulatory domain in the interval 5-122 (RVLSVDDSAL…REGMLAYSEM (118 aa)). At Asp56 the chain carries 4-aspartylphosphate. The 193-residue stretch at 152–344 (LLSSEKLIAI…QQMLAKISAG (193 aa)) folds into the CheB-type methylesterase domain. Active-site residues include Ser164, His190, and Asp286.

Belongs to the CheB family. In terms of processing, phosphorylated by CheA. Phosphorylation of the N-terminal regulatory domain activates the methylesterase activity.

The protein localises to the cytoplasm. The enzyme catalyses [protein]-L-glutamate 5-O-methyl ester + H2O = L-glutamyl-[protein] + methanol + H(+). It catalyses the reaction L-glutaminyl-[protein] + H2O = L-glutamyl-[protein] + NH4(+). Involved in chemotaxis. Part of a chemotaxis signal transduction system that modulates chemotaxis in response to various stimuli. Catalyzes the demethylation of specific methylglutamate residues introduced into the chemoreceptors (methyl-accepting chemotaxis proteins or MCP) by CheR. Also mediates the irreversible deamidation of specific glutamine residues to glutamic acid. The protein is Protein-glutamate methylesterase/protein-glutamine glutaminase of Salmonella choleraesuis (strain SC-B67).